A 311-amino-acid polypeptide reads, in one-letter code: Malate dehydrogenase (311 aa).

NAD(+) contacts are provided by residues 7–12 (GAGNVG) and aspartate 32. Positions 82 and 88 each coordinate substrate. NAD(+)-binding positions include asparagine 95 and 118 to 120 (VSN). 2 residues coordinate substrate: asparagine 120 and arginine 151. Residue histidine 175 is the Proton acceptor of the active site.

Belongs to the LDH/MDH superfamily. MDH type 3 family.

The catalysed reaction is (S)-malate + NAD(+) = oxaloacetate + NADH + H(+). Catalyzes the reversible oxidation of malate to oxaloacetate. The chain is Malate dehydrogenase from Flavobacterium johnsoniae (strain ATCC 17061 / DSM 2064 / JCM 8514 / BCRC 14874 / CCUG 350202 / NBRC 14942 / NCIMB 11054 / UW101) (Cytophaga johnsonae).